Reading from the N-terminus, the 281-residue chain is MGAIMLDGKATRDEIFGDLKQRVAALDAAGRTPGLGTILVGDDPGSQAYVRGKHADCAKVGITSIRRDLPADISTATLNETIDELNANPDCTGYIVQLPLPKHLDENAALERVDPAKDADGLHPTNLGRLVLGTPAPLPCTPRGIVHLLRRYDISIAGAHVVVIGRGVTVGRPLGLLLTRRSENATVTLCHTGTRDLPALTRQADIVVAAVGVAHLLTADMVRPGAAVIDVGVSRTDDGLVGDVHPDVWELAGHVSPNPGGVGPLTRAFLLTNVVELAERR.

Residues G165–G167, T192, and V233 contribute to the NADP(+) site.

The protein belongs to the tetrahydrofolate dehydrogenase/cyclohydrolase family. Homodimer.

The enzyme catalyses (6R)-5,10-methylene-5,6,7,8-tetrahydrofolate + NADP(+) = (6R)-5,10-methenyltetrahydrofolate + NADPH. The catalysed reaction is (6R)-5,10-methenyltetrahydrofolate + H2O = (6R)-10-formyltetrahydrofolate + H(+). The protein operates within one-carbon metabolism; tetrahydrofolate interconversion. In terms of biological role, catalyzes the oxidation of 5,10-methylenetetrahydrofolate to 5,10-methenyltetrahydrofolate and then the hydrolysis of 5,10-methenyltetrahydrofolate to 10-formyltetrahydrofolate. The chain is Bifunctional protein FolD from Mycobacterium tuberculosis (strain ATCC 25177 / H37Ra).